Consider the following 288-residue polypeptide: Peroxisomal membrane protein pex13 (288 aa).

Residues 1–32 (METNQNEKGPSLPSYPAGGIMSVSNSNADTNQ) are disordered. The segment covering 22 to 32 (SVSNSNADTNQ) has biased composition (polar residues). The chain crosses the membrane as a helical span at residues 178–198 (IYSIVSSLAIILGLVGLPYAI). The SH3 domain occupies 222–288 (DSLEFCKADY…PSNYCSIISR (67 aa)).

This sequence belongs to the peroxin-13 family. As to quaternary structure, interacts (via SH3 domain) with PEX14 (via SH3-binding motif); forming the PEX13-PEX14 docking complex.

The protein resides in the peroxisome membrane. Functionally, component of the PEX13-PEX14 docking complex, a translocon channel that specifically mediates the import of peroxisomal cargo proteins bound to PEX5 receptor. The PEX13-PEX14 docking complex forms a large import pore which can be opened to a diameter of about 9 nm. Mechanistically, PEX5 receptor along with cargo proteins associates with the PEX14 subunit of the PEX13-PEX14 docking complex in the cytosol, leading to the insertion of the receptor into the organelle membrane with the concomitant translocation of the cargo into the peroxisome matrix. The protein is Peroxisomal membrane protein pex13 (pex13) of Schizosaccharomyces pombe (strain 972 / ATCC 24843) (Fission yeast).